A 214-amino-acid polypeptide reads, in one-letter code: Ribosomal RNA small subunit methyltransferase G (214 aa).

Residues Gly-81, Met-86, 132 to 133 (VE), and Arg-147 each bind S-adenosyl-L-methionine.

The protein belongs to the methyltransferase superfamily. RNA methyltransferase RsmG family.

The protein resides in the cytoplasm. The catalysed reaction is guanosine(527) in 16S rRNA + S-adenosyl-L-methionine = N(7)-methylguanosine(527) in 16S rRNA + S-adenosyl-L-homocysteine. In terms of biological role, specifically methylates the N7 position of guanine in position 527 of 16S rRNA. This Ectopseudomonas mendocina (strain ymp) (Pseudomonas mendocina) protein is Ribosomal RNA small subunit methyltransferase G.